A 446-amino-acid polypeptide reads, in one-letter code: White-opaque regulator 2 (446 aa).

Positions 1–24 (MTQLPSVSELINRTGSIGSSSNIT) are enriched in polar residues. A disordered region spans residues 1 to 203 (MTQLPSVSEL…QPNFPYHNNF (203 aa)). Over residues 30-64 (TTTSATNTTTAATATTVTSTTPRSENSYSPNSPYS) the composition is skewed to low complexity. Over residues 67-86 (TRPSNTSLTNYSAGSGITVA) the composition is skewed to polar residues. 2 stretches are compositionally biased toward low complexity: residues 87–97 (SSSFQFSQPSP) and 104–120 (STSS…QHQS). Over residues 121–144 (NPSGVSMSSNTSPRTSIVQSMSSV) the composition is skewed to polar residues. Positions 166 to 184 (VQPPPQQQQLQQPPPPPPQ) are enriched in pro residues. The span at 185–195 (QQQHIYPQQQP) shows a compositional bias: low complexity. Positions 305-332 (CLTCRKRRIKCDERKPTCFNCERSKKSC) form a DNA-binding region, zn(2)-C6 fungal-type. A disordered region spans residues 336–402 (QDLSKLPPRK…SGSSTNSRNL (67 aa)). A compositionally biased stretch (low complexity) spans 358 to 369 (NQQQQQQQQNQQ). The segment covering 387–401 (HQITSISGSSTNSRN) has biased composition (polar residues).

The protein resides in the nucleus. Transcriptional regulator of the switch between 2 heritable states, the white and opaque states. These 2 cell types differ in many characteristics, including cell structure, mating competence, and virulence. Each state is heritable for many generations, and switching between states occurs stochastically, at low frequency. WOR2 is necessary for the stability of the opaque state phenotypic switching from the white to the opaque phase is a necessary step for mating. Plays a role in cell adhesion and pseudohyphal growth. The polypeptide is White-opaque regulator 2 (WOR2) (Candida albicans (strain SC5314 / ATCC MYA-2876) (Yeast)).